The sequence spans 425 residues: Serine--tRNA ligase (425 aa).

228 to 230 is a binding site for L-serine; the sequence is TAE. 259 to 261 contacts ATP; it reads RSE. Residue glutamate 282 coordinates L-serine. Residue 346-349 coordinates ATP; it reads EIAS. Serine 382 lines the L-serine pocket.

This sequence belongs to the class-II aminoacyl-tRNA synthetase family. Type-1 seryl-tRNA synthetase subfamily. In terms of assembly, homodimer. The tRNA molecule binds across the dimer.

Its subcellular location is the cytoplasm. It carries out the reaction tRNA(Ser) + L-serine + ATP = L-seryl-tRNA(Ser) + AMP + diphosphate + H(+). The enzyme catalyses tRNA(Sec) + L-serine + ATP = L-seryl-tRNA(Sec) + AMP + diphosphate + H(+). It functions in the pathway aminoacyl-tRNA biosynthesis; selenocysteinyl-tRNA(Sec) biosynthesis; L-seryl-tRNA(Sec) from L-serine and tRNA(Sec): step 1/1. In terms of biological role, catalyzes the attachment of serine to tRNA(Ser). Is also able to aminoacylate tRNA(Sec) with serine, to form the misacylated tRNA L-seryl-tRNA(Sec), which will be further converted into selenocysteinyl-tRNA(Sec). The polypeptide is Serine--tRNA ligase (Rickettsia akari (strain Hartford)).